A 472-amino-acid polypeptide reads, in one-letter code: N-succinylglutamate 5-semialdehyde dehydrogenase 1 (472 aa).

NAD(+) is bound at residue 209-214 (GGVQAG). Active-site residues include E232 and C266.

This sequence belongs to the aldehyde dehydrogenase family. AstD subfamily.

It catalyses the reaction N-succinyl-L-glutamate 5-semialdehyde + NAD(+) + H2O = N-succinyl-L-glutamate + NADH + 2 H(+). It participates in amino-acid degradation; L-arginine degradation via AST pathway; L-glutamate and succinate from L-arginine: step 4/5. Catalyzes the NAD-dependent reduction of succinylglutamate semialdehyde into succinylglutamate. This Caulobacter vibrioides (strain ATCC 19089 / CIP 103742 / CB 15) (Caulobacter crescentus) protein is N-succinylglutamate 5-semialdehyde dehydrogenase 1.